The primary structure comprises 477 residues: ATP synthase subunit beta (477 aa).

163-170 is a binding site for ATP; it reads GGAGVGKT.

This sequence belongs to the ATPase alpha/beta chains family. In terms of assembly, F-type ATPases have 2 components, CF(1) - the catalytic core - and CF(0) - the membrane proton channel. CF(1) has five subunits: alpha(3), beta(3), gamma(1), delta(1), epsilon(1). CF(0) has four main subunits: a(1), b(1), b'(1) and c(9-12).

Its subcellular location is the cellular thylakoid membrane. It catalyses the reaction ATP + H2O + 4 H(+)(in) = ADP + phosphate + 5 H(+)(out). Produces ATP from ADP in the presence of a proton gradient across the membrane. The catalytic sites are hosted primarily by the beta subunits. The protein is ATP synthase subunit beta of Synechococcus sp. (strain JA-3-3Ab) (Cyanobacteria bacterium Yellowstone A-Prime).